Reading from the N-terminus, the 284-residue chain is 2-dehydro-3-deoxyphosphooctonate aldolase (284 aa).

It belongs to the KdsA family.

It localises to the cytoplasm. It carries out the reaction D-arabinose 5-phosphate + phosphoenolpyruvate + H2O = 3-deoxy-alpha-D-manno-2-octulosonate-8-phosphate + phosphate. The protein operates within carbohydrate biosynthesis; 3-deoxy-D-manno-octulosonate biosynthesis; 3-deoxy-D-manno-octulosonate from D-ribulose 5-phosphate: step 2/3. It participates in bacterial outer membrane biogenesis; lipopolysaccharide biosynthesis. This chain is 2-dehydro-3-deoxyphosphooctonate aldolase, found in Pectobacterium carotovorum subsp. carotovorum (strain PC1).